A 484-amino-acid chain; its full sequence is tRNA sulfurtransferase (484 aa).

The THUMP domain maps to Arg63–Gln167. ATP contacts are provided by residues Leu185–Met186, Lys267, Gly289, and Gln298. Residues Cys346 and Cys457 are joined by a disulfide bond. In terms of domain architecture, Rhodanese spans Val405–Pro483. Catalysis depends on Cys457, which acts as the Cysteine persulfide intermediate.

It belongs to the ThiI family.

The protein resides in the cytoplasm. The catalysed reaction is [ThiI sulfur-carrier protein]-S-sulfanyl-L-cysteine + a uridine in tRNA + 2 reduced [2Fe-2S]-[ferredoxin] + ATP + H(+) = [ThiI sulfur-carrier protein]-L-cysteine + a 4-thiouridine in tRNA + 2 oxidized [2Fe-2S]-[ferredoxin] + AMP + diphosphate. It carries out the reaction [ThiS sulfur-carrier protein]-C-terminal Gly-Gly-AMP + S-sulfanyl-L-cysteinyl-[cysteine desulfurase] + AH2 = [ThiS sulfur-carrier protein]-C-terminal-Gly-aminoethanethioate + L-cysteinyl-[cysteine desulfurase] + A + AMP + 2 H(+). The protein operates within cofactor biosynthesis; thiamine diphosphate biosynthesis. Its function is as follows. Catalyzes the ATP-dependent transfer of a sulfur to tRNA to produce 4-thiouridine in position 8 of tRNAs, which functions as a near-UV photosensor. Also catalyzes the transfer of sulfur to the sulfur carrier protein ThiS, forming ThiS-thiocarboxylate. This is a step in the synthesis of thiazole, in the thiamine biosynthesis pathway. The sulfur is donated as persulfide by IscS. This Pseudomonas aeruginosa (strain UCBPP-PA14) protein is tRNA sulfurtransferase.